We begin with the raw amino-acid sequence, 280 residues long: Nucleotide-binding protein Swoo_4243 (280 aa).

8–15 provides a ligand contact to ATP; sequence GRSGSGKS. 56 to 59 provides a ligand contact to GTP; that stretch reads DVRN.

It belongs to the RapZ-like family.

Functionally, displays ATPase and GTPase activities. This Shewanella woodyi (strain ATCC 51908 / MS32) protein is Nucleotide-binding protein Swoo_4243.